Reading from the N-terminus, the 463-residue chain is Cysteine--tRNA ligase (463 aa).

Zn(2+) is bound at residue C29. The 'HIGH' region signature appears at 31 to 41 (PTVYNYAHIGN). Zn(2+) contacts are provided by C211, H236, and E240. Positions 269–273 (KMSKS) match the 'KMSKS' region motif. Residue K272 coordinates ATP.

Belongs to the class-I aminoacyl-tRNA synthetase family. Monomer. Zn(2+) serves as cofactor.

It is found in the cytoplasm. It catalyses the reaction tRNA(Cys) + L-cysteine + ATP = L-cysteinyl-tRNA(Cys) + AMP + diphosphate. The polypeptide is Cysteine--tRNA ligase (Caulobacter vibrioides (strain ATCC 19089 / CIP 103742 / CB 15) (Caulobacter crescentus)).